Reading from the N-terminus, the 701-residue chain is MSLKLNTPFPIFAPSLFPNHNPRAPSEIRFSRWGNANAERFEQRRRSQEELEAEIRRDRRFDAATKIVHTHDSEAAAAEPKTSPFRSRGTPSLPSARSIPGRRSKYSKPDSGPNRPKNKPRVPDSPPQLDAKPEVKLSEDGLTYVINGAPFEFKYSYTETPKVKPLKLREPAYAPFGPTTMGRPWTGRAPLPQSQKTPREFDSFRLPPVGKKGLKPVQKPGPFRPGVGPRYVYSKEEILGEPLTKEEVRELVTSCLKTTRQLNMGRDGLTHNMLNNIHDLWKRRRVCKIKCKGVCTVDMDNVCEQLEEKIGGKVIYRRGGVLFLFRGRNYNHRTRPRFPLMLWKPVAPVYPRLIQQVPEGLTRQEATNMRRKGRELMPICKLGKNGVYCDLVKNVKEAFEVCELVRIDCQGMKGSDFRKIGAKLKDLVPCVLVSFENEQILIWRGREWKSSLTTPDKKGDILEDIEVDTALPEDDEPSVSPNQSQTMTQNPPLDSMELQNDPDGHDLSPSTVDSSEMEGTINSLQSWSTKDVTEPTVDSFLRDLEEPEDEPETSEEISKQSIERVLILMKQAVESGTALVLDAADLDADTVFSKAVAFSSVASPGPVFQHGLRKQPTVKKQESQEFGYGDLEAKSSNVVVSRNASKSSNVVVFGKREVAERGEREEKEEGSKKKMDEFAEDYREVMPHGTLKVDELAKLLA.

Residues 1-37 constitute a chloroplast transit peptide; the sequence is MSLKLNTPFPIFAPSLFPNHNPRAPSEIRFSRWGNAN. Disordered regions lie at residues 68–136 and 191–221; these read VHTH…PEVK and LPQS…QKPG. CRM domains follow at residues 241-337 and 359-455; these read EPLT…TRPR and EGLT…LTTP. The segment at 471-532 is disordered; that stretch reads LPEDDEPSVS…SLQSWSTKDV (62 aa). Polar residues-rich tracts occupy residues 479–492 and 520–530; these read VSPN…QNPP and TINSLQSWSTK. The interval 564–586 is CRS2 binding; it reads RVLILMKQAVESGTALVLDAADL.

As to quaternary structure, interacts with CRS2 and RNA. Part of large ribonucleo-protein complexes that include group IIB introns, CRS2 and CAF1.

The protein localises to the plastid. Its subcellular location is the chloroplast stroma. In terms of biological role, required for the splicing of group IIB introns in chloroplasts. Forms splicing particles with CRS2. Interacts with RNA and confers intron specificity of the splicing particles. The polypeptide is CRS2-associated factor 1, chloroplastic (Arabidopsis thaliana (Mouse-ear cress)).